The primary structure comprises 1680 residues: SWI/SNF chromatin-remodeling complex subunit snf22 (1680 aa).

Disordered regions lie at residues 61-135, 203-258, 274-300, and 367-427; these read QQMR…SQAS, NNSF…HSFS, RRGS…ASPY, and YVYR…VPPT. The segment covering 62–91 has biased composition (polar residues); that stretch reads QMRNQSSEFPDAENTNLRKQQDTLPTTGFN. Low complexity-rich tracts occupy residues 118–127 and 222–233; these read GNGNVGLNNP and SSLPHSFASPSS. Residues 234–245 are compositionally biased toward polar residues; sequence TFEQPHTVQSRA. Low complexity-rich tracts occupy residues 247-258, 282-299, and 374-392; these read SVDTTSSSHSFS, PSTF…LASP, and PPSA…SVDP. A compositionally biased stretch (polar residues) spans 406–419; that stretch reads PSPSASALKTQSHV. Residues 429–465 enclose the QLQ domain; sequence KLNHAQLAMLKSQIVAYNCLNSPNGQVPPAVQQAIFG. The span at 477 to 489 shows a compositional bias: polar residues; it reads SMPFQQNVPQMSS. Residues 477-499 are disordered; sequence SMPFQQNVPQMSSVKKDTPTRDA. The segment covering 490 to 499 has biased composition (basic and acidic residues); sequence VKKDTPTRDA. In terms of domain architecture, HSA spans 704–776; the sequence is QKTEHAMRQK…ARQRLQALRA (73 aa). Residues 817 to 832 are compositionally biased toward polar residues; sequence SNIHSGNTSGKGSNSA. Residues 817–836 form a disordered region; that stretch reads SNIHSGNTSGKGSNSAELEA. The region spanning 881–1046 is the Helicase ATP-binding domain; the sequence is LSLYNNNLNG…WALLNFVLPK (166 aa). An ATP-binding site is contributed by 894-901; that stretch reads DEMGLGKT. A DEGH box motif is present at residues 996 to 999; that stretch reads DEGH. The Helicase C-terminal domain maps to 1191–1354; the sequence is LLDRILPKLF…STPEEREAFL (164 aa). The segment at 1466–1511 is disordered; sequence TVDDPSSTLMPRKRGRPRKKTNSGSSLSTPLSQESSLARSGRKNTP. Over residues 1476–1486 the composition is skewed to basic residues; the sequence is PRKRGRPRKKT. A compositionally biased stretch (low complexity) spans 1488-1502; sequence SGSSLSTPLSQESSL. The region spanning 1513-1623 is the Bromo domain; the sequence is YKQKALRRYC…KTLKEVIEDL (111 aa).

Belongs to the SNF2/RAD54 helicase family. Component of the SWI/SNF global transcription activator complex composed of at least arp9, arp42, snf5, snf22, snf30, sbf59, sol1, ssr1, ssr2, ssr3, ssr4 and tfg3.

It is found in the nucleus. Functionally, helicase. Component of the SWI/SNF complex, an ATP-dependent chromatin remodeling complex, required for the positive and negative regulation of gene expression of a large number of genes. It changes chromatin structure by altering DNA-histone contacts within a nucleosome, leading eventually to a change in nucleosome position, thus facilitating or repressing binding of gene-specific transcription factors. The chain is SWI/SNF chromatin-remodeling complex subunit snf22 (snf22) from Schizosaccharomyces pombe (strain 972 / ATCC 24843) (Fission yeast).